Reading from the N-terminus, the 485-residue chain is NADH-quinone oxidoreductase subunit N (485 aa).

Helical transmembrane passes span 8 to 28 (LIAL…MLSI), 35 to 55 (FLNA…LWFV), 71 to 91 (GFAM…CTFA), 105 to 125 (FYLL…ANHL), 127 to 147 (ALFL…GYAF), 159 to 179 (YTIL…LVYA), 203 to 223 (LLAG…LVPF), 235 to 255 (PAPV…GVVM), 271 to 291 (VVLG…ALSQ), 297 to 317 (LLGY…IVLQ), 326 to 346 (VGVY…VVSL), 373 to 393 (AAVM…LGFI), 408 to 430 (WWLV…RVAV), and 455 to 475 (IVVL…QPLI).

It belongs to the complex I subunit 2 family. In terms of assembly, NDH-1 is composed of 13 different subunits. Subunits NuoA, H, J, K, L, M, N constitute the membrane sector of the complex.

Its subcellular location is the cell inner membrane. The catalysed reaction is a quinone + NADH + 5 H(+)(in) = a quinol + NAD(+) + 4 H(+)(out). Functionally, NDH-1 shuttles electrons from NADH, via FMN and iron-sulfur (Fe-S) centers, to quinones in the respiratory chain. The immediate electron acceptor for the enzyme in this species is believed to be ubiquinone. Couples the redox reaction to proton translocation (for every two electrons transferred, four hydrogen ions are translocated across the cytoplasmic membrane), and thus conserves the redox energy in a proton gradient. This is NADH-quinone oxidoreductase subunit N from Salmonella choleraesuis (strain SC-B67).